The primary structure comprises 217 residues: Protein-L-isoaspartate O-methyltransferase (217 aa).

Ser65 is an active-site residue.

Belongs to the methyltransferase superfamily. L-isoaspartyl/D-aspartyl protein methyltransferase family.

It is found in the cytoplasm. It catalyses the reaction [protein]-L-isoaspartate + S-adenosyl-L-methionine = [protein]-L-isoaspartate alpha-methyl ester + S-adenosyl-L-homocysteine. Functionally, catalyzes the methyl esterification of L-isoaspartyl residues in peptides and proteins that result from spontaneous decomposition of normal L-aspartyl and L-asparaginyl residues. It plays a role in the repair and/or degradation of damaged proteins. The chain is Protein-L-isoaspartate O-methyltransferase from Methanoregula boonei (strain DSM 21154 / JCM 14090 / 6A8).